A 426-amino-acid chain; its full sequence is MGATGSSQLEKEISTTESVNNANEHYYGLVNFGNTCYCNSVIQALFFCRPFREKVLNYKQTLKKSGASKDNLVTCLADLFHSIASQKRRVGTIAPKRFITKLKKENELFDNYMQQDAHEFFNYLINTISETLIQEKIAEREKASRHGTLKKGNVTVNLAPATAGLPRSDEKGTSERNGGITVEGNEFLNKSDTTTWIHEIFQGILTNETRCLSCETVSSKDEDFLDLSIDVEQNTSISHCLRVFSETETLCGDQKYFCETCSSKQEAQKRMRIKKPPQLLALHLKRFKFVEPLNRHTKLSYRVVFPLELRLFNVSDDAEYGDRMYDLVATVVHCGATPNRGHYITLVKSNSFWLVFDDDIVEKLEVSSMEEFSGMSTDANIQMPPGNQSAPQKNSESAYILFYQARDYAADDPNHNHKGKNSTHSV.

G2 carries N-myristoyl glycine lipidation. The USP domain occupies 27-406; that stretch reads YGLVNFGNTC…SAYILFYQAR (380 aa). C36 functions as the Nucleophile in the catalytic mechanism. Residues 162–181 form a disordered region; it reads TAGLPRSDEKGTSERNGGIT. The Proton acceptor role is filled by H342.

Belongs to the peptidase C19 family. As to quaternary structure, interacts with wdr-20 and wdr-48; the catalytic activity of usp-46 is increased in the presence of both wdr-20 and wdr-48. Interacts with glr-1; the interaction results in deubiquitination of glr-1. As to expression, expressed in a number of tissues including the nervous system, pharynx, body wall muscle, vulva muscle and intestine and is detected in many head and ventral cord neurons.

It is found in the perikaryon. Its subcellular location is the cytoplasm. The catalysed reaction is Thiol-dependent hydrolysis of ester, thioester, amide, peptide and isopeptide bonds formed by the C-terminal Gly of ubiquitin (a 76-residue protein attached to proteins as an intracellular targeting signal).. In terms of biological role, regulates the abundance of the glr-1 glutamate receptor in the ventral nerve cord by promoting its deubiquitination and preventing its degradation in the lysosome. Contributes to the regulation of embryonic polarity. This chain is Ubiquitin carboxyl-terminal hydrolase 46 (usp-46), found in Caenorhabditis elegans.